Reading from the N-terminus, the 459-residue chain is Palmitoyltransferase PFA4 (459 aa).

Over 1-9 the chain is Cytoplasmic; the sequence is MAARNWSRV. The chain crosses the membrane as a helical span at residues 10-30; sequence WVGGTVILISFIAFSSQIFVI. Residues 31–37 lie on the Lumenal side of the membrane; it reads WPWYGRE. A helical membrane pass occupies residues 38–58; sequence ISLDLLKLLVPLNLAAFMIFW. The Cytoplasmic segment spans residues 59–138; the sequence is NYRLCVITSP…GNCVGFYNQG (80 aa). Residues 95–145 form the DHHC domain; the sequence is RYCKNCEHYKPPRAHHCRQCKTCWLKLDHHCPWIGNCVGFYNQGHFIRFLL. Cys125 functions as the S-palmitoyl cysteine intermediate in the catalytic mechanism. A helical transmembrane segment spans residues 139–159; sequence HFIRFLLWVDIGTTFHLIIMV. The Lumenal portion of the chain corresponds to 160–177; it reads RRVLYIAEYYHQEPTLAD. The chain crosses the membrane as a helical span at residues 178–198; the sequence is VLFLVFNFATCVPVWLCVGMF. Residues 199 to 459 lie on the Cytoplasmic side of the membrane; that stretch reads SIYHVYLACG…DTEEESGYAH (261 aa). The tract at residues 278–379 is disordered; it reads HTTQYFWPPQ…DYDHYDEGPM (102 aa). Positions 286–299 are enriched in pro residues; sequence PQDPSRLPNPPPIP. The span at 310–322 shows a compositional bias: polar residues; sequence NGFNPNLQPTNSL. Residues 331–356 are compositionally biased toward basic and acidic residues; that stretch reads HIDEDEHSHERDQYRHYSSGEERDND.

It belongs to the DHHC palmitoyltransferase family. PFA4 subfamily.

It localises to the endoplasmic reticulum membrane. It carries out the reaction L-cysteinyl-[protein] + hexadecanoyl-CoA = S-hexadecanoyl-L-cysteinyl-[protein] + CoA. Its function is as follows. Mediates the reversible addition of palmitate to target proteins, thereby regulating their membrane association and biological function. This chain is Palmitoyltransferase PFA4, found in Cryptococcus neoformans var. neoformans serotype D (strain B-3501A) (Filobasidiella neoformans).